Here is a 154-residue protein sequence, read N- to C-terminus: UPF0756 membrane protein BPUM_2558 (154 aa).

4 consecutive transmembrane segments (helical) span residues 8–28 (FLVL…ILAV), 54–74 (WGVT…DIGF), 87–107 (WIAL…IVLL), and 117–137 (LVFG…GPLI).

Belongs to the UPF0756 family.

It is found in the cell membrane. The chain is UPF0756 membrane protein BPUM_2558 from Bacillus pumilus (strain SAFR-032).